The following is a 143-amino-acid chain: MKLNTLAPAAGSKSAPKRLGRGIGSGLGKTSGKGHKGQKARSGGYHKVGFEGGQMPLQRRLPKFGFTSASKGYVAEIRLHELNNVVADEVTLDTLKDFGLIRKDIKTVKVIASGEIQKAVSLKGIACTKGAKEAIEKAGGKVE.

Residues 1 to 52 (MKLNTLAPAAGSKSAPKRLGRGIGSGLGKTSGKGHKGQKARSGGYHKVGFEG) are disordered. Gly residues predominate over residues 21 to 31 (RGIGSGLGKTS).

It belongs to the universal ribosomal protein uL15 family. In terms of assembly, part of the 50S ribosomal subunit.

Binds to the 23S rRNA. In Francisella tularensis subsp. tularensis (strain FSC 198), this protein is Large ribosomal subunit protein uL15.